Here is a 525-residue protein sequence, read N- to C-terminus: Chromosomal replication initiator protein DnaA (525 aa).

The domain I, interacts with DnaA modulators stretch occupies residues 1–71 (MNDFWQHCSA…SDLARDFWNA (71 aa)). Residues 71–188 (APIEVQFVLD…GEADSMYERS (118 aa)) are domain II. A disordered region spans residues 160–182 (AAAGRRTWRPGPGAAPANGGEAD). Positions 169 to 181 (PGPGAAPANGGEA) are enriched in low complexity. The interval 189-405 (KLNPVLTFDN…GALRKILAYS (217 aa)) is domain III, AAA+ region. ATP-binding residues include G233, G235, K236, and T237. The segment at 406 to 525 (KFHGREISIE…LHVLEQTLKG (120 aa)) is domain IV, binds dsDNA.

The protein belongs to the DnaA family. In terms of assembly, oligomerizes as a right-handed, spiral filament on DNA at oriC.

It is found in the cytoplasm. Functionally, plays an essential role in the initiation and regulation of chromosomal replication. ATP-DnaA binds to the origin of replication (oriC) to initiate formation of the DNA replication initiation complex once per cell cycle. Binds the DnaA box (a 9 base pair repeat at the origin) and separates the double-stranded (ds)DNA. Forms a right-handed helical filament on oriC DNA; dsDNA binds to the exterior of the filament while single-stranded (ss)DNA is stabiized in the filament's interior. The ATP-DnaA-oriC complex binds and stabilizes one strand of the AT-rich DNA unwinding element (DUE), permitting loading of DNA polymerase. After initiation quickly degrades to an ADP-DnaA complex that is not apt for DNA replication. Binds acidic phospholipids. The sequence is that of Chromosomal replication initiator protein DnaA from Burkholderia ambifaria (strain ATCC BAA-244 / DSM 16087 / CCUG 44356 / LMG 19182 / AMMD) (Burkholderia cepacia (strain AMMD)).